We begin with the raw amino-acid sequence, 496 residues long: tRNA-2-methylthio-N(6)-dimethylallyladenosine synthase (496 aa).

An MTTase N-terminal domain is found at 43–160 (KKVFVTTQGC…LPELYDQSHQ (118 aa)). The [4Fe-4S] cluster site is built by Cys52, Cys89, Cys123, Cys204, Cys208, and Cys211. The Radical SAM core domain occupies 190-422 (RVEGFKAFVS…QKVIIDSTLA (233 aa)). Residues 425–493 (HEMVGTTTRV…PHMVKGEIEA (69 aa)) form the TRAM domain.

Belongs to the methylthiotransferase family. MiaB subfamily. Monomer. [4Fe-4S] cluster serves as cofactor.

The protein resides in the cytoplasm. The catalysed reaction is N(6)-dimethylallyladenosine(37) in tRNA + (sulfur carrier)-SH + AH2 + 2 S-adenosyl-L-methionine = 2-methylsulfanyl-N(6)-dimethylallyladenosine(37) in tRNA + (sulfur carrier)-H + 5'-deoxyadenosine + L-methionine + A + S-adenosyl-L-homocysteine + 2 H(+). Functionally, catalyzes the methylthiolation of N6-(dimethylallyl)adenosine (i(6)A), leading to the formation of 2-methylthio-N6-(dimethylallyl)adenosine (ms(2)i(6)A) at position 37 in tRNAs that read codons beginning with uridine. The sequence is that of tRNA-2-methylthio-N(6)-dimethylallyladenosine synthase from Psychrobacter arcticus (strain DSM 17307 / VKM B-2377 / 273-4).